We begin with the raw amino-acid sequence, 489 residues long: Lysine--tRNA ligase (489 aa).

Mg(2+)-binding residues include Glu-398 and Glu-405.

It belongs to the class-II aminoacyl-tRNA synthetase family. Homodimer. The cofactor is Mg(2+).

The protein localises to the cytoplasm. The enzyme catalyses tRNA(Lys) + L-lysine + ATP = L-lysyl-tRNA(Lys) + AMP + diphosphate. The polypeptide is Lysine--tRNA ligase (Moorella thermoacetica (strain ATCC 39073 / JCM 9320)).